The sequence spans 231 residues: 7-cyano-7-deazaguanine synthase (231 aa).

Residue 8–18 (FSGGQDSTTCL) participates in ATP binding. Residues Cys-188, Cys-197, Cys-200, and Cys-203 each contribute to the Zn(2+) site.

The protein belongs to the QueC family. The cofactor is Zn(2+).

The enzyme catalyses 7-carboxy-7-deazaguanine + NH4(+) + ATP = 7-cyano-7-deazaguanine + ADP + phosphate + H2O + H(+). It participates in purine metabolism; 7-cyano-7-deazaguanine biosynthesis. In terms of biological role, catalyzes the ATP-dependent conversion of 7-carboxy-7-deazaguanine (CDG) to 7-cyano-7-deazaguanine (preQ(0)). The sequence is that of 7-cyano-7-deazaguanine synthase from Escherichia coli O157:H7.